A 1345-amino-acid polypeptide reads, in one-letter code: Membrane-anchored lipid-binding protein LAM4 (1345 aa).

Topologically, residues 1-1197 (MTRDSKKKHH…NFSSEIFMNK (1197 aa)) are cytoplasmic. 7 disordered regions span residues 51–80 (RVGG…KAAA), 115–134 (SLKG…PSLS), 139–164 (EKEK…DGHD), 190–302 (DADN…SLDD), 356–397 (LPEA…KPRR), 425–447 (SFNS…PREM), and 489–531 (STII…NGRQ). At threonine 66 the chain carries Phosphothreonine. Residues 216–228 (SENSTNNKNTSST) are compositionally biased toward low complexity. Residues 246–271 (SKSSTPSNQQLNTTEAGSKSKPSSLS) show a composition bias toward polar residues. Residues 283 to 294 (HSNSHSSSNAIS) show a composition bias toward low complexity. Polar residues predominate over residues 425–436 (SFNSSNGLTNND). Residues 498-516 (SNGRPSSGLRRSSSKSFSS) are compositionally biased toward low complexity. A GRAM domain is found at 549-616 (EFHAIFKDSG…FKTIVQIEKR (68 aa)). Positions 665–677 (SNSNNTNSSSNSI) are enriched in low complexity. The interval 665 to 722 (SNSNNTNSSSNSISDDENDDYDDDYDDYGDDDDDLYDNSNNISDSTDMTSSVSIGKPE) is disordered. Positions 678–700 (SDDENDDYDDDYDDYGDDDDDLY) are enriched in acidic residues. The residue at position 747 (serine 747) is a Phosphoserine. VASt domains are found at residues 758–930 (NEKL…TRSA) and 967–1139 (DDSI…SRAK). Positions 930-963 (ATKRKRSSKENTVTVSTLPKMEPSSHAPTEPDIQ) are disordered. Basic residues predominate over residues 1141–1158 (KKPVKKVMKSHDKHRPFH). The interval 1141-1172 (KKPVKKVMKSHDKHRPFHSKVEQKSSESRKSD) is disordered. Residues 1159–1172 (SKVEQKSSESRKSD) are compositionally biased toward basic and acidic residues. Residues 1198–1218 (LLSPQKLFLILGLTIMLFWSP) form a helical membrane-spanning segment. Residues 1219–1345 (RLHVFQEKNN…NIERDANDLS (127 aa)) are Lumenal-facing.

This sequence belongs to the YSP2 family.

It localises to the endoplasmic reticulum membrane. In terms of biological role, may be involved in sterol transfer between intracellular membranes. The polypeptide is Membrane-anchored lipid-binding protein LAM4 (Saccharomyces cerevisiae (strain ATCC 204508 / S288c) (Baker's yeast)).